The sequence spans 131 residues: MEETVNKILRAQETRAQLYKELEDALNANQEKKIGLEQMGIIVQLVTEGLNEVSSDIRNYQASLTKELKLLVDSLQEKERSKLQATVKLEQLKVVSTNSPVENTQISELEARLSSLSKEINDILQNMKDEI.

In terms of assembly, monomer.

The protein resides in the cytoplasm. The protein localises to the nucleus. Required for heterochromatin silencing within pericentromeric repeats and at telomers. Facilitates the recruitment of Clr6 histone deacetylase (HDAC) by interacting with histones. Also interacts with Rad25, which mediates heterochromatin silencing in DNA repeats by recruiting the RITS complex. Together with Rad25, forms a regulatory hub that defines heterochromatin silencing within tandem repeats via linking RNAi and HDAC. This Schizosaccharomyces pombe (strain 972 / ATCC 24843) (Fission yeast) protein is Heterochromatin silencing protein rss1 (rss1).